A 169-amino-acid chain; its full sequence is Phosphopantetheine adenylyltransferase (169 aa).

Residue threonine 14 coordinates substrate. ATP contacts are provided by residues 14–15 and histidine 22; that span reads TF. The substrate site is built by lysine 46, leucine 78, and arginine 92. Residues 93–95, glutamate 103, and 128–134 contribute to the ATP site; these read GLR and HSFISSS.

Belongs to the bacterial CoaD family. In terms of assembly, homohexamer. The cofactor is Mg(2+).

Its subcellular location is the cytoplasm. The enzyme catalyses (R)-4'-phosphopantetheine + ATP + H(+) = 3'-dephospho-CoA + diphosphate. It functions in the pathway cofactor biosynthesis; coenzyme A biosynthesis; CoA from (R)-pantothenate: step 4/5. In terms of biological role, reversibly transfers an adenylyl group from ATP to 4'-phosphopantetheine, yielding dephospho-CoA (dPCoA) and pyrophosphate. This Stenotrophomonas maltophilia (strain R551-3) protein is Phosphopantetheine adenylyltransferase.